A 321-amino-acid polypeptide reads, in one-letter code: Phospho-N-acetylmuramoyl-pentapeptide-transferase (321 aa).

10 helical membrane-spanning segments follow: residues 1 to 21, 50 to 70, 76 to 96, 112 to 132, 140 to 160, 176 to 196, 200 to 220, 225 to 245, 250 to 270, and 300 to 320; these read MIFV…PVLI, MGGL…IIFV, IILL…DDYI, FLAQ…FHLV, IPFT…IVFW, GLAT…SFVL, AIGI…PYNI, VFMG…ISIM, LSLI…MLQV, and VVTV…WIGV.

The protein belongs to the glycosyltransferase 4 family. MraY subfamily. The cofactor is Mg(2+).

Its subcellular location is the cell membrane. It carries out the reaction UDP-N-acetyl-alpha-D-muramoyl-L-alanyl-gamma-D-glutamyl-L-lysyl-D-alanyl-D-alanine + di-trans,octa-cis-undecaprenyl phosphate = Mur2Ac(oyl-L-Ala-gamma-D-Glu-L-Lys-D-Ala-D-Ala)-di-trans,octa-cis-undecaprenyl diphosphate + UMP. The protein operates within cell wall biogenesis; peptidoglycan biosynthesis. Functionally, catalyzes the initial step of the lipid cycle reactions in the biosynthesis of the cell wall peptidoglycan: transfers peptidoglycan precursor phospho-MurNAc-pentapeptide from UDP-MurNAc-pentapeptide onto the lipid carrier undecaprenyl phosphate, yielding undecaprenyl-pyrophosphoryl-MurNAc-pentapeptide, known as lipid I. This is Phospho-N-acetylmuramoyl-pentapeptide-transferase from Staphylococcus aureus (strain MSSA476).